The primary structure comprises 1508 residues: ABC-type transporter oblD (1508 aa).

Disordered regions lie at residues 1–35 and 54–82; these read MSLG…LTNN and KYTQ…PNGG. Polar residues predominate over residues 11-24; that stretch reads TPNSVMPSDASLHN. N-linked (GlcNAc...) asparagine glycans are attached at residues asparagine 24 and asparagine 35. Residues 55–68 are compositionally biased toward polar residues; sequence YTQNSVYSTTSQNP. Asparagine 83, asparagine 231, and asparagine 314 each carry an N-linked (GlcNAc...) asparagine glycan. In terms of domain architecture, ABC transporter 1 spans 136–390; that stretch reads LEAVGLVRKL…FLNMGFVCPD (255 aa). 5 consecutive transmembrane segments (helical) span residues 501–521, 536–556, 610–630, 643–663, and 752–772; these read ITIS…SMFF, LLFF…LTLY, GNFF…SMFF, ALPF…FTIP, and GIIF…SDFI. An ABC transporter 2 domain is found at 828–1070; that stretch reads FQWKDICYDI…ILIDYFTRNG (243 aa). Position 864–871 (864–871) interacts with ATP; sequence GVSGAGKT. 4 consecutive transmembrane segments (helical) span residues 1172 to 1192, 1206 to 1226, 1296 to 1316, and 1322 to 1342; these read YIYS…FSLY, FAIF…MPHF, LFVW…IAAL, and AGNM…ILTT. Residue asparagine 1390 is glycosylated (N-linked (GlcNAc...) asparagine). Residues 1443-1463 form a helical membrane-spanning segment; it reads FGLMWVFVVFNAFAACGLYYW.

The protein belongs to the ABC transporter superfamily. ABCG family. PDR (TC 3.A.1.205) subfamily.

The protein localises to the cell membrane. Functionally, ABC-type transporter; part of the gene cluster that mediates the biosynthesis of the sesterterpenes ophiobolins, fungal phytotoxins with potential anti-cancer activities. Acts as a specific transporter involved in ophiobolins secretion. The sequence is that of ABC-type transporter oblD from Cochliobolus heterostrophus (strain C5 / ATCC 48332 / race O) (Southern corn leaf blight fungus).